Here is a 155-residue protein sequence, read N- to C-terminus: Endoribonuclease YbeY (155 aa).

Residues His-114, His-118, and His-124 each coordinate Zn(2+).

The protein belongs to the endoribonuclease YbeY family. The cofactor is Zn(2+).

It localises to the cytoplasm. Functionally, single strand-specific metallo-endoribonuclease involved in late-stage 70S ribosome quality control and in maturation of the 3' terminus of the 16S rRNA. In Escherichia coli O6:K15:H31 (strain 536 / UPEC), this protein is Endoribonuclease YbeY.